The chain runs to 121 residues: Putative SNURF-like protein (121 aa).

The protein belongs to the SNURF family.

This Homo sapiens (Human) protein is Putative SNURF-like protein (SNURFL).